The chain runs to 34 residues: Thermomycolin (34 aa).

Residue S33 is the Charge relay system of the active site.

Belongs to the peptidase S8 family.

The protein resides in the secreted. It carries out the reaction Rather non-specific hydrolysis of proteins. Preferential cleavage: -Ala-|-Xaa-, -Tyr-|-Xaa-, -Phe-|-Xaa- in small molecular substrates.. In terms of biological role, this is an extracellular proteinase with a general specificity for apolar residues. In Malbranchea cinnamomea (Thermophilic fungus), this protein is Thermomycolin.